Consider the following 372-residue polypeptide: Probable dual-specificity RNA methyltransferase RlmN (372 aa).

The active-site Proton acceptor is the glutamate 106. A Radical SAM core domain is found at 112 to 359; it reads YPQRNTVCIS…SCTVRDTRGR (248 aa). A disulfide bridge links cysteine 119 with cysteine 365. The [4Fe-4S] cluster site is built by cysteine 126, cysteine 130, and cysteine 133. S-adenosyl-L-methionine is bound by residues 186-187, serine 220, 243-245, and asparagine 322; these read GE and SLH. Catalysis depends on cysteine 365, which acts as the S-methylcysteine intermediate.

Belongs to the radical SAM superfamily. RlmN family. [4Fe-4S] cluster is required as a cofactor.

It is found in the cytoplasm. It catalyses the reaction adenosine(2503) in 23S rRNA + 2 reduced [2Fe-2S]-[ferredoxin] + 2 S-adenosyl-L-methionine = 2-methyladenosine(2503) in 23S rRNA + 5'-deoxyadenosine + L-methionine + 2 oxidized [2Fe-2S]-[ferredoxin] + S-adenosyl-L-homocysteine. The catalysed reaction is adenosine(37) in tRNA + 2 reduced [2Fe-2S]-[ferredoxin] + 2 S-adenosyl-L-methionine = 2-methyladenosine(37) in tRNA + 5'-deoxyadenosine + L-methionine + 2 oxidized [2Fe-2S]-[ferredoxin] + S-adenosyl-L-homocysteine. Functionally, specifically methylates position 2 of adenine 2503 in 23S rRNA and position 2 of adenine 37 in tRNAs. The chain is Probable dual-specificity RNA methyltransferase RlmN from Mycolicibacterium smegmatis (strain ATCC 700084 / mc(2)155) (Mycobacterium smegmatis).